Consider the following 374-residue polypeptide: Ribosomal RNA large subunit methyltransferase G (374 aa).

It belongs to the methyltransferase superfamily. RlmG family.

The protein localises to the cytoplasm. It catalyses the reaction guanosine(1835) in 23S rRNA + S-adenosyl-L-methionine = N(2)-methylguanosine(1835) in 23S rRNA + S-adenosyl-L-homocysteine + H(+). Specifically methylates the guanine in position 1835 (m2G1835) of 23S rRNA. The protein is Ribosomal RNA large subunit methyltransferase G of Pseudomonas fluorescens (strain ATCC BAA-477 / NRRL B-23932 / Pf-5).